A 494-amino-acid polypeptide reads, in one-letter code: Transcription factor SOX-9 (494 aa).

2 disordered regions span residues 1-66 (MNLL…ESDE) and 159-275 (ERLR…FRDV). Low complexity predominate over residues 27-42 (SDDSAGSPCPSGSGSD). Basic and acidic residues-rich tracts occupy residues 56-66 (GDPDLKKESDE) and 159-174 (ERLRVQHKKDHPDYKY). The dimerization (DIM) stretch occupies residues 63–103 (ESDEDKFPVCIREAVSQVLKGYDWTLVPMPVRVNGSSKNKP). A PQA region spans residues 63–103 (ESDEDKFPVCIREAVSQVLKGYDWTLVPMPVRVNGSSKNKP). The residue at position 64 (S64) is a Phosphoserine. The segment at residues 105–173 (VKRPMNAFMV…QHKKDHPDYK (69 aa)) is a DNA-binding region (HMG box). S181 is modified (phosphoserine). Low complexity predominate over residues 211-222 (SPQSSSSISEVH). Residues 224 to 309 (PGEHSGQSQG…LPPNGHPGVP (86 aa)) form a transactivation domain (TAM) region. Short sequence motifs (9aaTAD) lie at residues 277-286 (IGELSSDVIS) and 292-300 (DVNEFDQYL). Low complexity predominate over residues 326–337 (SSASSPAGAGHA). The disordered stretch occupies residues 326–402 (SSASSPAGAG…PQQQQQQQQQ (77 aa)). A compositionally biased stretch (pro residues) spans 344–353 (PQPPQPPAQP). The segment at 372 to 494 (RPHIKTEQLS…QPVYTQLTRP (123 aa)) is transactivation domain (TAC). K376 is covalently cross-linked (Glycyl lysine isopeptide (Lys-Gly) (interchain with G-Cter in SUMO)). Over residues 378–387 (EQLSPSHYSE) the composition is skewed to polar residues. Over residues 388–402 (QQQHSPQQQQQQQQQ) the composition is skewed to low complexity. Residues 445–453 (GGLYSTFTY) carry the 9aaTAD 3 motif. The disordered stretch occupies residues 462–494 (YTPIADTSGVPSIPQTHSPQHWEQPVYTQLTRP). A compositionally biased stretch (polar residues) spans 470-494 (GVPSIPQTHSPQHWEQPVYTQLTRP).

Interacts with SNAI2; triggers neural crest delamination in a phosphorylation dependent manner. Interacts with UBE2I. Post-translationally, phosphorylated at Ser-181 in the developing neural tube. Phosphorylation at either Ser-64 or Ser-181 is required for sumoylation, but phosphorylation is not dependent on sumoylation. Sumoylation is enhanced by PKA. Phosphorylation is required for interaction with SNAI2 to trigger neural crest delamination and for an efficient trunk neural crest delamination, whereas sumoylation plays a less significant role. Phosphorylation and sumoylation are induced by BMP signaling pathway. In terms of processing, sumoylated at Lys-376; phosphorylation at either Ser-64 or Ser-181 is required for sumoylation. Sumoylation is induced by BMP signaling pathway.

It localises to the nucleus. Transcription factor that plays a key role in chondrocytes differentiation and skeletal development. Specifically binds the 5'-ACAAAG-3' DNA motif present in enhancers and super-enhancers and promotes expression of genes important for chondrogenesis, including COL2A1. Plays a central role in successive steps of chondrocyte differentiation. Absolutely required for precartilaginous condensation, the first step in chondrogenesis during which skeletal progenitors differentiate into prechondrocytes. Together with SOX5 and SOX6, required for overt chondrogenesis when condensed prechondrocytes differentiate into early stage chondrocytes, the second step in chondrogenesis. Later, required to direct hypertrophic maturation and block osteoblast differentiation of growth plate chondrocytes: maintains chondrocyte columnar proliferation, delays prehypertrophy and then prevents osteoblastic differentiation of chondrocytes. Also required for chondrocyte hypertrophy, both indirectly, by keeping the lineage fate of chondrocytes, and directly, by remaining present in upper hypertrophic cells. Low lipid levels are the main nutritional determinant for chondrogenic commitment of skeletal progenitor cells: when lipids levels are low, FOXO transcription factors promote expression of SOX9, which induces chondrogenic commitment and suppresses fatty acid oxidation. In addition to cartilage development, also acts as a regulator of proliferation and differentiation in epithelial stem/progenitor cells. In response to bone morphogenetic protein stimulus, phosphorylation is induced and then sumoylation, allowing cooperation with SNAI2 to trigger neural crest delamination. The chain is Transcription factor SOX-9 from Gallus gallus (Chicken).